The sequence spans 435 residues: Serine/threonine-protein kinase 40 (435 aa).

One can recognise a Protein kinase domain in the interval 35–332 (FVLGPRLGNS…DVLEALSAII (298 aa)). Residues 41 to 49 (LGNSPVPSI) and Lys-66 each bind ATP. Asp-197 acts as the Proton acceptor in catalysis.

Belongs to the protein kinase superfamily. CAMK Ser/Thr protein kinase family.

The protein resides in the nucleus. Its subcellular location is the cytoplasm. It carries out the reaction L-seryl-[protein] + ATP = O-phospho-L-seryl-[protein] + ADP + H(+). The enzyme catalyses L-threonyl-[protein] + ATP = O-phospho-L-threonyl-[protein] + ADP + H(+). In terms of biological role, may be a negative regulator of NF-kappa-B and p53-mediated gene transcription. The protein is Serine/threonine-protein kinase 40 (Stk40) of Mus musculus (Mouse).